The following is a 453-amino-acid chain: D-aminoacyl-tRNA deacylase (453 aa).

Residues 428–453 (VRADVALHERPRERVRRPSDDEGKGN) are disordered.

It belongs to the DtdA deacylase family. Monomer. The cofactor is Zn(2+).

It catalyses the reaction a D-aminoacyl-tRNA + H2O = a tRNA + a D-alpha-amino acid + H(+). The catalysed reaction is glycyl-tRNA(Ala) + H2O = tRNA(Ala) + glycine + H(+). Functionally, D-aminoacyl-tRNA deacylase with broad substrate specificity. By recycling D-aminoacyl-tRNA to D-amino acids and free tRNA molecules, this enzyme counteracts the toxicity associated with the formation of D-aminoacyl-tRNA entities in vivo. This Halobacterium salinarum (strain ATCC 29341 / DSM 671 / R1) protein is D-aminoacyl-tRNA deacylase.